The sequence spans 547 residues: Chaperonin GroEL 2 (547 aa).

ATP-binding positions include 30-33 (TLGP), Lys-51, 87-91 (DGTTT), Gly-415, 479-481 (NAA), and Asp-495. The segment at 526 to 547 (KEESAAPAGGGMGGMGGMGGMM) is disordered. The segment covering 533–547 (AGGGMGGMGGMGGMM) has biased composition (gly residues).

This sequence belongs to the chaperonin (HSP60) family. As to quaternary structure, forms a cylinder of 14 subunits composed of two heptameric rings stacked back-to-back. Interacts with the co-chaperonin GroES.

Its subcellular location is the cytoplasm. It catalyses the reaction ATP + H2O + a folded polypeptide = ADP + phosphate + an unfolded polypeptide.. Functionally, together with its co-chaperonin GroES, plays an essential role in assisting protein folding. The GroEL-GroES system forms a nano-cage that allows encapsulation of the non-native substrate proteins and provides a physical environment optimized to promote and accelerate protein folding. This Anaeromyxobacter sp. (strain Fw109-5) protein is Chaperonin GroEL 2.